The sequence spans 292 residues: Ventral anterior homeobox 2 (292 aa).

Residues 1-36 show a composition bias toward basic and acidic residues; sequence MGDGGAERDRGPKRREEPGGRSGRHGEHRGAEDLRA. Positions 1-74 are disordered; that stretch reads MGDGGAERDR…DGQQALGETD (74 aa). The segment at residues 102–161 is a DNA-binding region (homeobox); the sequence is PKRTRTSFTAEQLYRLEMEFQRCQYVVGRERTELARQLNLSETQVKVWFQNRRTKQKKDQ. Residues 207–242 are disordered; that stretch reads LPGLPASHRGTSLVDPRNSSPRLNPMPSASASSPLP.

This sequence belongs to the EMX homeobox family. Expressed in the developing and mature retina.

It localises to the nucleus. Functionally, transcription factor that may function in dorsoventral specification of the forebrain. Regulates the expression of Wnt signaling antagonists including the expression of a truncated TCF7L2 isoform that cannot bind CTNNB1 and acts therefore as a potent dominant-negative Wnt antagonist. Plays a crucial role in eye development and, in particular, in the specification of the ventral optic vesicle. May be a regulator of axial polarization in the retina. The protein is Ventral anterior homeobox 2 (Vax2) of Mus musculus (Mouse).